The following is a 395-amino-acid chain: NAD(P)H-quinone oxidoreductase subunit H (395 aa).

Belongs to the complex I 49 kDa subunit family. As to quaternary structure, NDH-1 can be composed of about 15 different subunits; different subcomplexes with different compositions have been identified which probably have different functions.

It is found in the cellular thylakoid membrane. The enzyme catalyses a plastoquinone + NADH + (n+1) H(+)(in) = a plastoquinol + NAD(+) + n H(+)(out). The catalysed reaction is a plastoquinone + NADPH + (n+1) H(+)(in) = a plastoquinol + NADP(+) + n H(+)(out). Its function is as follows. NDH-1 shuttles electrons from an unknown electron donor, via FMN and iron-sulfur (Fe-S) centers, to quinones in the respiratory and/or the photosynthetic chain. The immediate electron acceptor for the enzyme in this species is believed to be plastoquinone. Couples the redox reaction to proton translocation, and thus conserves the redox energy in a proton gradient. Cyanobacterial NDH-1 also plays a role in inorganic carbon-concentration. In Prochlorococcus marinus (strain MIT 9301), this protein is NAD(P)H-quinone oxidoreductase subunit H.